The chain runs to 205 residues: Proteasome subunit beta type-3 (205 aa).

Belongs to the peptidase T1B family. The 26S proteasome consists of a 20S proteasome core and two 19S regulatory subunits. The 20S proteasome core is composed of 28 subunits that are arranged in four stacked rings, resulting in a barrel-shaped structure. The two end rings are each formed by seven alpha subunits, and the two central rings are each formed by seven beta subunits. The catalytic chamber with the active sites is on the inside of the barrel.

Its subcellular location is the cytoplasm. It localises to the nucleus. Its function is as follows. Non-catalytic component of the proteasome, a multicatalytic proteinase complex which is characterized by its ability to cleave peptides with Arg, Phe, Tyr, Leu, and Glu adjacent to the leaving group at neutral or slightly basic pH. The proteasome has an ATP-dependent proteolytic activity. In Drosophila melanogaster (Fruit fly), this protein is Proteasome subunit beta type-3.